Reading from the N-terminus, the 782-residue chain is Coiled-coil alpha-helical rod protein 1 (782 aa).

2 stretches are compositionally biased toward basic and acidic residues: residues 62–74 (ERDVSSDRQEPGR) and 208–218 (ETRRAGEAKEL). Disordered regions lie at residues 62–82 (ERDVSSDRQEPGRRGRSWGLE) and 185–218 (AHKEALSSLTSKAEGLEKSLSSLETRRAGEAKEL). 3 coiled-coil regions span residues 82-314 (EGSQ…ELTR), 344-398 (LMVQ…EVER), and 498-691 (VTDV…QQEG).

It localises to the cytoplasm. It is found in the nucleus. Its function is as follows. May be a regulator of keratinocyte proliferation or differentiation. In Gorilla gorilla gorilla (Western lowland gorilla), this protein is Coiled-coil alpha-helical rod protein 1 (CCHCR1).